The sequence spans 161 residues: Efficient mitochondria targeting-associated protein 19 (161 aa).

Over methionine 1–phenylalanine 10 the chain is Cytoplasmic. Positions glutamate 7–cysteine 159 constitute an EXPERA domain. A helical membrane pass occupies residues tyrosine 11 to isoleucine 31. Residues proline 32–glutamate 61 lie on the Lumenal side of the membrane. Residues tryptophan 62–valine 82 traverse the membrane as a helical segment. The Cytoplasmic segment spans residues asparagine 83–lysine 101. Residues tryptophan 102–phenylalanine 122 traverse the membrane as a helical segment. At lysine 123–lysine 141 the chain is on the lumenal side. A helical membrane pass occupies residues cysteine 142–phenylalanine 160. Valine 161 is a topological domain (cytoplasmic).

Belongs to the TMEM97/sigma-2 receptor family.

Its subcellular location is the endoplasmic reticulum membrane. Its function is as follows. Part of an import route for newly synthesized mitochondrial proteins termed the ER-SURF pathway (ER surface-mediated protein targeting), which retrieves mitochondrial precursor proteins from the ER surface and reroutes them to mitochondria for efficient mitochondrial import. Acts as a quality control factor in the ER, promoting the proteolytic degradation of nonproductive and extramitochondrial precursor proteins in the ER membrane thus removing them from the ER surface. The sequence is that of Efficient mitochondria targeting-associated protein 19 from Saccharomyces cerevisiae (strain ATCC 204508 / S288c) (Baker's yeast).